Here is a 617-residue protein sequence, read N- to C-terminus: Zinc finger protein 613 (617 aa).

In terms of domain architecture, KRAB spans 8 to 78; the sequence is LTLEDVAVEF…ENEIHSQICP (71 aa). C2H2-type zinc fingers lie at residues 204 to 226, 232 to 254, 260 to 282, 288 to 310, 316 to 338, 344 to 366, 372 to 394, 400 to 422, 428 to 450, 456 to 478, 484 to 506, and 512 to 535; these read HVCT…QRVH, HGCS…QRNH, YECT…QKIH, YICS…QRVH, HGCS…QRTH, YECT…QKAH, YICR…QRIH, YICN…RRTH, YVCN…QRFH, FVCT…QRIH, YTCS…RRTH, and YGCS…GMLH.

This sequence belongs to the krueppel C2H2-type zinc-finger protein family.

Its subcellular location is the nucleus. In terms of biological role, may be involved in transcriptional regulation. The sequence is that of Zinc finger protein 613 (ZNF613) from Homo sapiens (Human).